Reading from the N-terminus, the 390-residue chain is Endothelial cell-selective adhesion molecule (390 aa).

The N-terminal stretch at 1–29 (MISLPGPLVTNLLRFLFLGLSALAPPSRA) is a signal peptide. Positions 30–143 (ELQLHLPANQ…NGQASGHSIK (114 aa)) constitute an Ig-like V-type domain. The Extracellular segment spans residues 30–248 (ELQLHLPANQ…LEVSTGPGAA (219 aa)). N-linked (GlcNAc...) asparagine glycans are attached at residues N108, N169, N213, and N236. The Ig-like C2-type domain maps to 156-242 (PSCRLQGVPR…AQCNVTLEVS (87 aa)). A disulfide bond links C174 and C224. Residues 249–269 (VVAGAVVGTLVGLGLLAGLVL) traverse the membrane as a helical segment. Topologically, residues 270–390 (LYHRRGKALE…PAQSQAGSLV (121 aa)) are cytoplasmic. S301 bears the Phosphoserine mark. The segment at 316–365 (ARALRPPHGPPRPGALTPTPSLSSQALPSPRLPTTDGANPQPISLIPGGV) is disordered. Phosphothreonine occurs at positions 332 and 334. Over residues 333-342 (PTPSLSSQAL) the composition is skewed to polar residues. 4 positions are modified to phosphoserine: S336, S339, S344, and S371.

As to quaternary structure, interacts with MAGI1.

The protein resides in the cell junction. It localises to the adherens junction. It is found in the tight junction. The protein localises to the cell membrane. Can mediate aggregation most likely through a homophilic molecular interaction. This Macaca fascicularis (Crab-eating macaque) protein is Endothelial cell-selective adhesion molecule (ESAM).